Here is a 179-residue protein sequence, read N- to C-terminus: Hypoxanthine-guanine phosphoribosyltransferase (179 aa).

K42 and G43 together coordinate diphosphate. The Mg(2+) site is built by E98 and D99. The Proton acceptor role is filled by E102. GMP-binding positions include K130, 151-152 (FV), and D158. R164 serves as a coordination point for diphosphate.

It belongs to the purine/pyrimidine phosphoribosyltransferase family. Mg(2+) is required as a cofactor.

Its subcellular location is the cytoplasm. It carries out the reaction IMP + diphosphate = hypoxanthine + 5-phospho-alpha-D-ribose 1-diphosphate. The catalysed reaction is GMP + diphosphate = guanine + 5-phospho-alpha-D-ribose 1-diphosphate. It functions in the pathway purine metabolism; IMP biosynthesis via salvage pathway; IMP from hypoxanthine: step 1/1. The protein operates within purine metabolism; GMP biosynthesis via salvage pathway; GMP from guanine: step 1/1. Purine salvage pathway enzyme that catalyzes the transfer of the ribosyl-5-phosphate group from 5-phospho-alpha-D-ribose 1-diphosphate (PRPP) to the N9 position of the 6-oxopurines hypoxanthine and guanine to form the corresponding ribonucleotides IMP (inosine 5'-monophosphate) and GMP (guanosine 5'-monophosphate), with the release of PPi. This Staphylococcus epidermidis (strain ATCC 35984 / DSM 28319 / BCRC 17069 / CCUG 31568 / BM 3577 / RP62A) protein is Hypoxanthine-guanine phosphoribosyltransferase (hpt).